A 353-amino-acid polypeptide reads, in one-letter code: Photosystem II D2 protein (353 aa).

Position 2 is an N-acetylthreonine (T2). Phosphothreonine is present on T2. A helical transmembrane segment spans residues 41–61; the sequence is CAYFALGGWFTGTTFVTSWYT. H118 provides a ligand contact to chlorophyll a. A helical transmembrane segment spans residues 125–141; sequence GFMLRQFELARSVQLRP. Q130 and N143 together coordinate pheophytin a. The helical transmembrane segment at 153-166 threads the bilayer; that stretch reads VFVSVFLIYPLGQS. H198 provides a ligand contact to chlorophyll a. Residues 208 to 228 traverse the membrane as a helical segment; sequence AALLCAIHGATVENTLFEDGD. Residues H215 and F262 each coordinate a plastoquinone. Residue H215 participates in Fe cation binding. A Fe cation-binding site is contributed by H269. The chain crosses the membrane as a helical span at residues 279–295; sequence GLWMSAIGVVGLALNLR.

It belongs to the reaction center PufL/M/PsbA/D family. PSII is composed of 1 copy each of membrane proteins PsbA, PsbB, PsbC, PsbD, PsbE, PsbF, PsbH, PsbI, PsbJ, PsbK, PsbL, PsbM, PsbT, PsbX, PsbY, PsbZ, Psb30/Ycf12, at least 3 peripheral proteins of the oxygen-evolving complex and a large number of cofactors. It forms dimeric complexes. The D1/D2 heterodimer binds P680, chlorophylls that are the primary electron donor of PSII, and subsequent electron acceptors. It shares a non-heme iron and each subunit binds pheophytin, quinone, additional chlorophylls, carotenoids and lipids. There is also a Cl(-1) ion associated with D1 and D2, which is required for oxygen evolution. The PSII complex binds additional chlorophylls, carotenoids and specific lipids. serves as cofactor. Phosphorylated on threonine residue(s); phosphorylation increases with increasing light levels.

The protein resides in the plastid. It localises to the chloroplast thylakoid membrane. The catalysed reaction is 2 a plastoquinone + 4 hnu + 2 H2O = 2 a plastoquinol + O2. Functionally, photosystem II (PSII) is a light-driven water:plastoquinone oxidoreductase that uses light energy to abstract electrons from H(2)O, generating O(2) and a proton gradient subsequently used for ATP formation. It consists of a core antenna complex that captures photons, and an electron transfer chain that converts photonic excitation into a charge separation. The D1/D2 (PsbA/PsbD) reaction center heterodimer binds P680, the primary electron donor of PSII as well as several subsequent electron acceptors. D2 is needed for assembly of a stable PSII complex. This chain is Photosystem II D2 protein, found in Marchantia polymorpha (Common liverwort).